Here is a 251-residue protein sequence, read N- to C-terminus: Octanoyltransferase (251 aa).

The 223-residue stretch at 29 to 251 folds into the BPL/LPL catalytic domain; that stretch reads AATPNSLWIC…GQKLSSYLAP (223 aa). 68 to 75 contributes to the substrate binding site; it reads RGGQVTYH. The interval 137–174 is disordered; the sequence is ARLRPSPQPSPKGRGSSTPVLLPPLPGEGGGGGGPDPD. Substrate is bound by residues 184 to 186 and 197 to 199; these read ALG and GVA. Catalysis depends on Cys-215, which acts as the Acyl-thioester intermediate.

Belongs to the LipB family.

Its subcellular location is the cytoplasm. The catalysed reaction is octanoyl-[ACP] + L-lysyl-[protein] = N(6)-octanoyl-L-lysyl-[protein] + holo-[ACP] + H(+). Its pathway is protein modification; protein lipoylation via endogenous pathway; protein N(6)-(lipoyl)lysine from octanoyl-[acyl-carrier-protein]: step 1/2. Functionally, catalyzes the transfer of endogenously produced octanoic acid from octanoyl-acyl-carrier-protein onto the lipoyl domains of lipoate-dependent enzymes. Lipoyl-ACP can also act as a substrate although octanoyl-ACP is likely to be the physiological substrate. This chain is Octanoyltransferase, found in Polaromonas sp. (strain JS666 / ATCC BAA-500).